The following is a 420-amino-acid chain: Histidine--tRNA ligase (420 aa).

The protein belongs to the class-II aminoacyl-tRNA synthetase family. Homodimer.

Its subcellular location is the cytoplasm. It carries out the reaction tRNA(His) + L-histidine + ATP = L-histidyl-tRNA(His) + AMP + diphosphate + H(+). The polypeptide is Histidine--tRNA ligase (Thermodesulfovibrio yellowstonii (strain ATCC 51303 / DSM 11347 / YP87)).